Consider the following 177-residue polypeptide: MPIKSRIRAIPDYPKKGIMFRDITTLIKDPVGFRLVIDNLTQRYLENGVDFDVIVGIEARGFIIGSALAYALGKGFVPVRKPGKLPADTVSQEYALEYGTDKIEIHIDALEKGARVLLVDDLLATGGTALAAAPLIEKVGGVVSEMAFIVNLPDIGGEEKILAKGYKVFSLTAFEGE.

The protein belongs to the purine/pyrimidine phosphoribosyltransferase family. Homodimer.

The protein resides in the cytoplasm. The enzyme catalyses AMP + diphosphate = 5-phospho-alpha-D-ribose 1-diphosphate + adenine. It participates in purine metabolism; AMP biosynthesis via salvage pathway; AMP from adenine: step 1/1. In terms of biological role, catalyzes a salvage reaction resulting in the formation of AMP, that is energically less costly than de novo synthesis. The polypeptide is Adenine phosphoribosyltransferase (Chlorobium luteolum (strain DSM 273 / BCRC 81028 / 2530) (Pelodictyon luteolum)).